The chain runs to 407 residues: Lysosome-associated membrane glycoprotein 1 (407 aa).

Positions Met-1 to Ser-21 are cleaved as a signal peptide. The tract at residues Ala-22–Asp-189 is first lumenal domain. The Lumenal segment spans residues Ala-22 to Asn-371. N-linked (GlcNAc...) asparagine glycosylation is found at Asn-32, Asn-59, Asn-71, Asn-79, Asn-102, Asn-116, Asn-125, Asn-145, Asn-160, and Asn-178. Residues Cys-36 and Cys-75 are joined by a disulfide bond. Residues Cys-150 and Cys-186 are joined by a disulfide bond. Positions Ser-180–Val-211 are disordered. The interval Gln-190–Asp-219 is hinge. The span at Thr-194 to Pro-206 shows a compositional bias: pro residues. N-linked (GlcNAc...) asparagine glycosylation is found at Asn-215, Asn-220, Asn-233, Asn-241, Asn-271, Asn-283, Asn-297, and Asn-312. The second lumenal domain stretch occupies residues Asn-220–Asn-371. Residues Cys-223 and Cys-260 are joined by a disulfide bond. A disulfide bridge links Cys-328 with Cys-365. The helical transmembrane segment at Met-372 to Ile-395 threads the bilayer. Over Gly-396–Ile-407 the chain is Cytoplasmic.

This sequence belongs to the LAMP family. In terms of assembly, interacts with ABCB9; this interaction strongly stabilizes ABCB9 and protects ABCB9 against lysosomal degradation. Interacts with FURIN. Interacts with TMEM175; inhibiting the proton channel activity of TMEM175. O- and N-glycosylated; some of the N-glycans attached to LAMP-1 are polylactosaminoglycans.

It localises to the lysosome membrane. It is found in the endosome membrane. Its subcellular location is the late endosome membrane. The protein resides in the cell membrane. The protein localises to the cytolytic granule membrane. Functionally, lysosomal membrane glycoprotein which plays an important role in lysosome biogenesis, lysosomal pH regulation, autophagy and cholesterol homeostasis. Acts as an important regulator of lysosomal lumen pH regulation by acting as a direct inhibitor of the proton channel TMEM175, facilitating lysosomal acidification for optimal hydrolase activity. Also plays an important role in NK-cells cytotoxicity. Mechanistically, participates in cytotoxic granule movement to the cell surface and perforin trafficking to the lytic granule. In addition, protects NK-cells from degranulation-associated damage induced by their own cytotoxic granule content. Presents carbohydrate ligands to selectins. The polypeptide is Lysosome-associated membrane glycoprotein 1 (Lamp1) (Rattus norvegicus (Rat)).